The chain runs to 262 residues: Cyclin-dependent kinase inhibitor 1 (262 aa).

A disordered region spans residues 140–212; the sequence is SDVAEAGSEH…SAQQATRPKI (73 aa). Over residues 160-169 the composition is skewed to basic and acidic residues; it reads SGRDRERRET. Positions 198–208 are enriched in low complexity; it reads SAATASAQQAT.

Belongs to the CDI family. ICK/KRP subfamily.

In Oryza sativa subsp. indica (Rice), this protein is Cyclin-dependent kinase inhibitor 1 (KRP1).